Consider the following 111-residue polypeptide: WAP four-disulfide core domain protein 12 (111 aa).

A signal peptide spans 1–23 (MGSSSFLVLTVSLALVTLVAAEG). The WAP domain maps to 27–74 (GIEKAGVCPADNVRCFKSDPPQCHTDQDCLGARKCCYLHCGFKCVIPV). 4 disulfide bridges follow: Cys34/Cys62, Cys41/Cys66, Cys49/Cys61, and Cys55/Cys70. The disordered stretch occupies residues 80-111 (GGNKDEDVSGPCPEPGWEAKSPGSSSTGCPQK). Positions 101 to 111 (PGSSSTGCPQK) are enriched in polar residues.

It is found in the secreted. Functionally, antibacterial protein. Putative acid-stable proteinase inhibitor. The protein is WAP four-disulfide core domain protein 12 (WFDC12) of Papio anubis (Olive baboon).